Reading from the N-terminus, the 188-residue chain is Crossover junction endodeoxyribonuclease RuvC (188 aa).

Residues aspartate 7, glutamate 68, and aspartate 141 contribute to the active site. The Mg(2+) site is built by aspartate 7, glutamate 68, and aspartate 141.

Belongs to the RuvC family. Homodimer which binds Holliday junction (HJ) DNA. The HJ becomes 2-fold symmetrical on binding to RuvC with unstacked arms; it has a different conformation from HJ DNA in complex with RuvA. In the full resolvosome a probable DNA-RuvA(4)-RuvB(12)-RuvC(2) complex forms which resolves the HJ. The cofactor is Mg(2+).

It localises to the cytoplasm. The catalysed reaction is Endonucleolytic cleavage at a junction such as a reciprocal single-stranded crossover between two homologous DNA duplexes (Holliday junction).. Functionally, the RuvA-RuvB-RuvC complex processes Holliday junction (HJ) DNA during genetic recombination and DNA repair. Endonuclease that resolves HJ intermediates. Cleaves cruciform DNA by making single-stranded nicks across the HJ at symmetrical positions within the homologous arms, yielding a 5'-phosphate and a 3'-hydroxyl group; requires a central core of homology in the junction. The consensus cleavage sequence is 5'-(A/T)TT(C/G)-3'. Cleavage occurs on the 3'-side of the TT dinucleotide at the point of strand exchange. HJ branch migration catalyzed by RuvA-RuvB allows RuvC to scan DNA until it finds its consensus sequence, where it cleaves and resolves the cruciform DNA. In Mycobacterium tuberculosis (strain ATCC 25177 / H37Ra), this protein is Crossover junction endodeoxyribonuclease RuvC.